Here is a 161-residue protein sequence, read N- to C-terminus: uncharacterized protein (161 aa).

2 consecutive transmembrane segments (helical) span residues valine 13 to asparagine 35 and valine 40 to serine 62.

Its subcellular location is the cell membrane. This is an uncharacterized protein from Archaeoglobus fulgidus (strain ATCC 49558 / DSM 4304 / JCM 9628 / NBRC 100126 / VC-16).